The primary structure comprises 523 residues: Flavonoid 3',5'-hydroxylase (523 aa).

Cys460 is a heme binding site.

The protein belongs to the cytochrome P450 family. The cofactor is heme.

The enzyme catalyses a 3',5'-unsubstituted flavanone + 2 reduced [NADPH--hemoprotein reductase] + 2 O2 = a 3',5'-dihydroxyflavanone + 2 oxidized [NADPH--hemoprotein reductase] + 2 H2O + 2 H(+). The protein operates within pigment biosynthesis; anthocyanin biosynthesis. Functionally, catalyzes the 3'5'-hydroxylation of naringenin and eriodictyol to form 5,7,3,'4',5'-pentahydroxyflavanone and 3',5'-hydroxylation of dihydrokaempferol and dihydroquercetin to form dihydromyricetin. The polypeptide is Flavonoid 3',5'-hydroxylase (CYP75A6) (Campanula medium (Canterbury bells)).